Here is a 278-residue protein sequence, read N- to C-terminus: Indole-3-glycerol phosphate synthase (278 aa).

Belongs to the TrpC family.

The catalysed reaction is 1-(2-carboxyphenylamino)-1-deoxy-D-ribulose 5-phosphate + H(+) = (1S,2R)-1-C-(indol-3-yl)glycerol 3-phosphate + CO2 + H2O. Its pathway is amino-acid biosynthesis; L-tryptophan biosynthesis; L-tryptophan from chorismate: step 4/5. The protein is Indole-3-glycerol phosphate synthase of Stutzerimonas stutzeri (strain A1501) (Pseudomonas stutzeri).